The chain runs to 114 residues: MGEGFKSALIIALLTSILKNGYLLIDSAEAFHHPSSLEITSQMLTKSVKNNNVQVFLTTHSLELIDFLLEHASKEGIEGRLIYMRRDGENLISSMESFENVREMRETLGIDLRG.

This is an uncharacterized protein from Methanocaldococcus jannaschii (strain ATCC 43067 / DSM 2661 / JAL-1 / JCM 10045 / NBRC 100440) (Methanococcus jannaschii).